Consider the following 561-residue polypeptide: Potassium-transporting ATPase potassium-binding subunit (561 aa).

The next 12 membrane-spanning stretches (helical) occupy residues 5–25 (LAAG…YVPV), 60–80 (YGYA…LYAL), 86–106 (VLPL…NTAV), 131–151 (GLAV…VALI), 177–197 (ILLP…VIQS), 247–267 (PTPV…VSLT), 281–301 (LTLL…TLAA), 324–344 (FGIP…TGAV), 376–396 (GLYG…LLVG), 415–435 (ALSV…TVIL), 488–508 (ALGL…LALA), and 537–557 (GTVV…GPIA).

Belongs to the KdpA family. In terms of assembly, the system is composed of three essential subunits: KdpA, KdpB and KdpC.

It localises to the cell membrane. Part of the high-affinity ATP-driven potassium transport (or Kdp) system, which catalyzes the hydrolysis of ATP coupled with the electrogenic transport of potassium into the cytoplasm. This subunit binds the extracellular potassium ions and delivers the ions to the membrane domain of KdpB through an intramembrane tunnel. The chain is Potassium-transporting ATPase potassium-binding subunit from Rhodococcus opacus (strain B4).